We begin with the raw amino-acid sequence, 345 residues long: S-adenosylmethionine:tRNA ribosyltransferase-isomerase (345 aa).

This sequence belongs to the QueA family. In terms of assembly, monomer.

It localises to the cytoplasm. The catalysed reaction is 7-aminomethyl-7-carbaguanosine(34) in tRNA + S-adenosyl-L-methionine = epoxyqueuosine(34) in tRNA + adenine + L-methionine + 2 H(+). The protein operates within tRNA modification; tRNA-queuosine biosynthesis. Functionally, transfers and isomerizes the ribose moiety from AdoMet to the 7-aminomethyl group of 7-deazaguanine (preQ1-tRNA) to give epoxyqueuosine (oQ-tRNA). This is S-adenosylmethionine:tRNA ribosyltransferase-isomerase from Helicobacter pylori (strain ATCC 700392 / 26695) (Campylobacter pylori).